A 186-amino-acid chain; its full sequence is Elongation factor P (186 aa).

It belongs to the elongation factor P family.

It localises to the cytoplasm. It participates in protein biosynthesis; polypeptide chain elongation. Its function is as follows. Involved in peptide bond synthesis. Stimulates efficient translation and peptide-bond synthesis on native or reconstituted 70S ribosomes in vitro. Probably functions indirectly by altering the affinity of the ribosome for aminoacyl-tRNA, thus increasing their reactivity as acceptors for peptidyl transferase. The polypeptide is Elongation factor P (Streptococcus agalactiae serotype Ia (strain ATCC 27591 / A909 / CDC SS700)).